A 292-amino-acid polypeptide reads, in one-letter code: Ribosomal protein L11 methyltransferase (292 aa).

S-adenosyl-L-methionine-binding residues include Thr-144, Gly-165, Asp-187, and Asn-229.

The protein belongs to the methyltransferase superfamily. PrmA family.

It localises to the cytoplasm. The enzyme catalyses L-lysyl-[protein] + 3 S-adenosyl-L-methionine = N(6),N(6),N(6)-trimethyl-L-lysyl-[protein] + 3 S-adenosyl-L-homocysteine + 3 H(+). In terms of biological role, methylates ribosomal protein L11. The sequence is that of Ribosomal protein L11 methyltransferase from Pseudomonas fluorescens (strain SBW25).